The sequence spans 179 residues: ADP-ribosylation factor 1-like 1 (179 aa).

Residue G2 is the site of N-myristoyl glycine attachment. The segment at 3 to 16 (LFFSKISSFMFPNI) is important for the stable binding to the membranes. Residues 24–32 (GLDGAGKTT), 126–129 (NKQD), and A160 each bind GTP.

Belongs to the small GTPase superfamily. Arf family.

The protein resides in the golgi apparatus membrane. It catalyses the reaction GTP + H2O = GDP + phosphate + H(+). Alternates between an inactive GDP-bound form and an active GTP-bound form. Activated by a guanine nucleotide-exchange factor (GEF) and inactivated by GTPase-activating protein (GAP). Small GTPase involved in protein trafficking between different compartments. Modulates vesicle budding and uncoating within the Golgi complex. In its GTP-bound form, triggers the recruitment of coatomer proteins to the Golgi membrane. The hydrolysis of ARF1-bound GTP, which is mediated by ARFGAPs proteins, is required for dissociation of coat proteins from Golgi membranes and vesicles. The protein is ADP-ribosylation factor 1-like 1 (arf-1.1) of Caenorhabditis elegans.